A 68-amino-acid chain; its full sequence is DNA-directed RNA polymerase subunit omega (68 aa).

The protein belongs to the RNA polymerase subunit omega family. As to quaternary structure, the RNAP catalytic core consists of 2 alpha, 1 beta, 1 beta' and 1 omega subunit. When a sigma factor is associated with the core the holoenzyme is formed, which can initiate transcription.

The catalysed reaction is RNA(n) + a ribonucleoside 5'-triphosphate = RNA(n+1) + diphosphate. Promotes RNA polymerase assembly. Latches the N- and C-terminal regions of the beta' subunit thereby facilitating its interaction with the beta and alpha subunits. This Neisseria meningitidis serogroup C (strain 053442) protein is DNA-directed RNA polymerase subunit omega.